The chain runs to 328 residues: UPF0421 protein SAUSA300_1870 (328 aa).

Helical transmembrane passes span 19–39 (IAIFLTAVFCMALDLTPIYAI), 61–81 (LPATVIGAGFAVLFTYLFGDQ), 108–128 (VAVLTSLAMIPGIHDAYIFNF), and 132–152 (TLTAIIGLVTSGLINFMVFPP).

Belongs to the UPF0421 family.

Its subcellular location is the cell membrane. The sequence is that of UPF0421 protein SAUSA300_1870 from Staphylococcus aureus (strain USA300).